Consider the following 291-residue polypeptide: 33 kDa chaperonin (291 aa).

2 disulfide bridges follow: cysteine 229–cysteine 231 and cysteine 262–cysteine 265.

The protein belongs to the HSP33 family. Under oxidizing conditions two disulfide bonds are formed involving the reactive cysteines. Under reducing conditions zinc is bound to the reactive cysteines and the protein is inactive.

It is found in the cytoplasm. Its function is as follows. Redox regulated molecular chaperone. Protects both thermally unfolding and oxidatively damaged proteins from irreversible aggregation. Plays an important role in the bacterial defense system toward oxidative stress. The protein is 33 kDa chaperonin of Vibrio parahaemolyticus serotype O3:K6 (strain RIMD 2210633).